The sequence spans 109 residues: Spermidine export protein MdtI (109 aa).

The Periplasmic portion of the chain corresponds to 1 to 5 (MAQFE). A helical transmembrane segment spans residues 6–26 (WVHAAWLALAIVLEIIANVFL). The Cytoplasmic segment spans residues 27 to 35 (KFSDGFRRK). A helical transmembrane segment spans residues 36–56 (IFGLLSLAAVLAAFSALSQAV). The Periplasmic segment spans residues 57-63 (KGIDLSV). Residues 64–84 (AYALWGGFGIAATLAAGWILF) form a helical membrane-spanning segment. At 85–87 (GQR) the chain is on the cytoplasmic side. A helical transmembrane segment spans residues 88–108 (LNRKGWIGLVLLLAGMIMVKL). A topological domain (periplasmic) is located at residue Ala-109.

Belongs to the drug/metabolite transporter (DMT) superfamily. Small multidrug resistance (SMR) (TC 2.A.7.1) family. MdtI subfamily. Forms a complex with MdtJ.

It localises to the cell inner membrane. Functionally, catalyzes the excretion of spermidine. In Escherichia coli O6:H1 (strain CFT073 / ATCC 700928 / UPEC), this protein is Spermidine export protein MdtI (mdtI).